The following is a 172-amino-acid chain: Lytic chitin monooxygenase (172 aa).

Residues Met1–Ala30 form the signal peptide. Positions 31 and 106 each coordinate Cu cation. A Chitin-binding type-4 domain is found at His31–Val168.

It depends on Cu(2+) as a cofactor.

The protein resides in the secreted. The enzyme catalyses [(1-&gt;4)-N-acetyl-beta-D-glucosaminyl]n+m + reduced acceptor + O2 = [(1-&gt;4)-N-acetyl-beta-D-glucosaminyl]m-1-(1-&gt;4)-2-(acetylamino)-2-deoxy-D-glucono-1,5-lactone + [(1-&gt;4)-N-acetyl-beta-D-glucosaminyl]n + acceptor + H2O.. The protein operates within glycan degradation; chitin degradation. Functionally, involved in chitin degradation. Catalyzes the oxidative cleavage of glycosidic bonds in chitin via a copper-dependent mechanism, leading to oxidized chitooligomers with degrees of polymerization of 4-6. Is not active on cellulose. The sequence is that of Lytic chitin monooxygenase from Streptomyces ambofaciens (strain ATCC 23877 / 3486 / DSM 40053 / JCM 4204 / NBRC 12836 / NRRL B-2516).